The chain runs to 309 residues: Olfactory receptor 5B21 (309 aa).

Residues M1–L26 lie on the Extracellular side of the membrane. N3 is a glycosylation site (N-linked (GlcNAc...) asparagine). Residues L27–I47 form a helical membrane-spanning segment. Over H48–T55 the chain is Cytoplasmic. Residues P56–A76 traverse the membrane as a helical segment. Residues P77–C95 are Extracellular-facing. A disulfide bridge connects residues C95 and C177. The chain crosses the membrane as a helical span at residues A96–M116. Topologically, residues A117 to G137 are cytoplasmic. A helical membrane pass occupies residues V138–A158. Residues A159–V199 are Extracellular-facing. Residues A200 to I220 form a helical membrane-spanning segment. The Cytoplasmic segment spans residues T221–F235. Residues S236–Y256 form a helical membrane-spanning segment. The Extracellular portion of the chain corresponds to L257–I270. An N-linked (GlcNAc...) asparagine glycan is attached at N260. Residues A271–N291 form a helical membrane-spanning segment. Over K292–Y309 the chain is Cytoplasmic.

The protein belongs to the G-protein coupled receptor 1 family.

It localises to the cell membrane. Functionally, odorant receptor. The chain is Olfactory receptor 5B21 from Homo sapiens (Human).